Reading from the N-terminus, the 205-residue chain is MLHITDTAQKYLIKLLSYQKKSTQIRFSVKNPGTPHAQCNISYYLPKTHHNSKDIEIKFSQFSIYLEKHLIPFIQKTTIDIVSNDLGIQLSIKSPNLYHSKNDNHVNNTQNNINYKSPTLENQIKHILTHQINPQLAMHGGSVSLVKITSDSIAILKFHGGCNGCAMAFYTIKEGIEKTLKKLCPELNGVIDSTQHQPGTHSFFK.

Cysteine 162 and cysteine 165 together coordinate [4Fe-4S] cluster.

This sequence belongs to the NfuA family. As to quaternary structure, homodimer. The cofactor is [4Fe-4S] cluster.

Its function is as follows. Involved in iron-sulfur cluster biogenesis. Binds a 4Fe-4S cluster, can transfer this cluster to apoproteins, and thereby intervenes in the maturation of Fe/S proteins. Could also act as a scaffold/chaperone for damaged Fe/S proteins. The sequence is that of Fe/S biogenesis protein NfuA from Blochmanniella floridana.